The chain runs to 783 residues: Cation/H(+) antiporter 2 (783 aa).

The next 12 membrane-spanning stretches (helical) occupy residues 19–39 (LNTMFIQMACILVFSQLFYLL), 43–63 (CGQAGPVAQILAGIVLSPVLL), 81–101 (YYSFFSFALRTSFMFLIGLEV), 121–141 (FVVSGLLSFASLMLFIPLFGI), 145–165 (YFTFFLVLLVTLSNTASPVVV), 186–206 (ALFIELTNVVLYTIIMAFISG), 208–228 (IILELFLFLLATVALILINMV), 242–262 (YLSKAETLVFFIFLLIIGITI), 300–320 (EFVLPVYFGYIGFRFSIIALT), 323–343 (FYLGIVIIVIVTIAGKFIGVI), 355–375 (YWLFLPTILSVKGHVGLLLLD), and 391–411 (MMVAALVITTLVSGVLASFLL).

Belongs to the monovalent cation:proton antiporter 2 (CPA2) transporter (TC 2.A.37) family. CHX (TC 2.A.37.4) subfamily. As to expression, specifically expressed in pollen.

It localises to the membrane. Functionally, may operate as a cation/H(+) antiporter. In Arabidopsis thaliana (Mouse-ear cress), this protein is Cation/H(+) antiporter 2 (CHX2).